The primary structure comprises 119 residues: Ribosome-binding factor A (119 aa).

This sequence belongs to the RbfA family. In terms of assembly, monomer. Binds 30S ribosomal subunits, but not 50S ribosomal subunits or 70S ribosomes.

The protein resides in the cytoplasm. In terms of biological role, one of several proteins that assist in the late maturation steps of the functional core of the 30S ribosomal subunit. Associates with free 30S ribosomal subunits (but not with 30S subunits that are part of 70S ribosomes or polysomes). Required for efficient processing of 16S rRNA. May interact with the 5'-terminal helix region of 16S rRNA. In Buchnera aphidicola subsp. Acyrthosiphon pisum (strain Tuc7), this protein is Ribosome-binding factor A.